The primary structure comprises 366 residues: MVIKFLSALILLLVTTAAQAERIRDLTSVQGVRQNSLIGYGLVVGLDGTGDQTTQTPFTTQTLNNMLSQLGITVPTGTNMQLKNVAAVMVTASLPPFGRQGQTIDVVVSSMGNAKSLRGGTLLMTPLKGVDSQVYALAQGNILVGGAGASAGGSSVQVNQLNGGRITNGAVIERELPSQFGVGNTLNLQLNDEDFSMAQQIADTINRVRGYGSATALDARTIQVRVPSGNSSQVRFLADIQNMQVNVTPQDAKVVINSRTGSVVMNREVTLDSCAVAQGNLSVTVNRQANVSQPDTPFGGGQTVVTPQTQIDLRQSGGSLQSVRSSASLNNVVRALNALGATPMDLMSILQSMQSAGCLRAKLEII.

A signal peptide spans M1–A20.

The protein belongs to the FlgI family. As to quaternary structure, the basal body constitutes a major portion of the flagellar organelle and consists of four rings (L,P,S, and M) mounted on a central rod.

The protein resides in the periplasm. It is found in the bacterial flagellum basal body. Its function is as follows. Assembles around the rod to form the L-ring and probably protects the motor/basal body from shearing forces during rotation. This chain is Flagellar P-ring protein, found in Escherichia coli (strain UTI89 / UPEC).